A 445-amino-acid chain; its full sequence is Glutamate--tRNA ligase 1 (445 aa).

Positions 8–18 match the 'HIGH' region motif; sequence PSPTGKLHVGN. The short motif at 239 to 243 is the 'KMSKS' region element; it reads KLSKR. ATP is bound at residue lysine 242.

This sequence belongs to the class-I aminoacyl-tRNA synthetase family. Glutamate--tRNA ligase type 1 subfamily. As to quaternary structure, monomer.

It is found in the cytoplasm. It catalyses the reaction tRNA(Glu) + L-glutamate + ATP = L-glutamyl-tRNA(Glu) + AMP + diphosphate. Its function is as follows. Catalyzes the attachment of glutamate to tRNA(Glu) in a two-step reaction: glutamate is first activated by ATP to form Glu-AMP and then transferred to the acceptor end of tRNA(Glu). The polypeptide is Glutamate--tRNA ligase 1 (Maricaulis maris (strain MCS10) (Caulobacter maris)).